The sequence spans 215 residues: Urease accessory protein UreG 2 (215 aa).

A GTP-binding site is contributed by 11 to 18; the sequence is GPVGSGKT.

The protein belongs to the SIMIBI class G3E GTPase family. UreG subfamily. Homodimer. UreD, UreF and UreG form a complex that acts as a GTP-hydrolysis-dependent molecular chaperone, activating the urease apoprotein by helping to assemble the nickel containing metallocenter of UreC. The UreE protein probably delivers the nickel.

The protein resides in the cytoplasm. Functionally, facilitates the functional incorporation of the urease nickel metallocenter. This process requires GTP hydrolysis, probably effectuated by UreG. The polypeptide is Urease accessory protein UreG 2 (Methylorubrum extorquens (strain PA1) (Methylobacterium extorquens)).